A 140-amino-acid polypeptide reads, in one-letter code: ATP synthase epsilon chain (140 aa).

Belongs to the ATPase epsilon chain family. F-type ATPases have 2 components, CF(1) - the catalytic core - and CF(0) - the membrane proton channel. CF(1) has five subunits: alpha(3), beta(3), gamma(1), delta(1), epsilon(1). CF(0) has three main subunits: a, b and c.

It is found in the cell inner membrane. Produces ATP from ADP in the presence of a proton gradient across the membrane. In Janthinobacterium sp. (strain Marseille) (Minibacterium massiliensis), this protein is ATP synthase epsilon chain.